Consider the following 416-residue polypeptide: Adenylosuccinate synthetase (416 aa).

Residues 13–19 and 41–43 each bind GTP; these read GDEGKGK and GHT. D14 functions as the Proton acceptor in the catalytic mechanism. Residues D14 and G41 each contribute to the Mg(2+) site. Residues 14-17, 39-42, T126, R140, Q220, T235, and R299 contribute to the IMP site; these read DEGK and NAGH. The active-site Proton donor is H42. Substrate is bound at residue 295–301; the sequence is VSTGRKR. GTP contacts are provided by residues R301, 327-329, and 405-407; these read KLD and STS.

It belongs to the adenylosuccinate synthetase family. As to quaternary structure, homodimer. The cofactor is Mg(2+).

It localises to the cytoplasm. The enzyme catalyses IMP + L-aspartate + GTP = N(6)-(1,2-dicarboxyethyl)-AMP + GDP + phosphate + 2 H(+). It participates in purine metabolism; AMP biosynthesis via de novo pathway; AMP from IMP: step 1/2. In terms of biological role, plays an important role in the de novo pathway of purine nucleotide biosynthesis. Catalyzes the first committed step in the biosynthesis of AMP from IMP. In Campylobacter jejuni subsp. jejuni serotype O:23/36 (strain 81-176), this protein is Adenylosuccinate synthetase.